The primary structure comprises 333 residues: Fructose-1,6-bisphosphatase class 1 1 (333 aa).

Mg(2+) is bound by residues Glu81, Asp100, Leu102, and Asp103. Residues 103–106 (DGSS) and Asn191 contribute to the substrate site. Glu263 provides a ligand contact to Mg(2+).

This sequence belongs to the FBPase class 1 family. Homotetramer. It depends on Mg(2+) as a cofactor.

Its subcellular location is the cytoplasm. It carries out the reaction beta-D-fructose 1,6-bisphosphate + H2O = beta-D-fructose 6-phosphate + phosphate. It participates in carbohydrate biosynthesis; Calvin cycle. The chain is Fructose-1,6-bisphosphatase class 1 1 from Cereibacter sphaeroides (strain ATCC 17023 / DSM 158 / JCM 6121 / CCUG 31486 / LMG 2827 / NBRC 12203 / NCIMB 8253 / ATH 2.4.1.) (Rhodobacter sphaeroides).